The following is a 198-amino-acid chain: Phage-like element PBSX protein XkdA (198 aa).

It to B.subtilis YqaB.

This is Phage-like element PBSX protein XkdA (xkdA) from Bacillus subtilis (strain 168).